The chain runs to 367 residues: D-alanine--D-alanine ligase (367 aa).

Residues 148–357 enclose the ATP-grasp domain; that stretch reads KMAFEQAGLP…FPELVDKLVQ (210 aa). 184–239 contributes to the ATP binding site; it reads EASLGYPCFVKPANLGSSVGISKVRSRQELEDALDNAANYDRRIIVEAGVVAREVE. Mg(2+) is bound by residues Asp-310, Glu-324, and Asn-326.

It belongs to the D-alanine--D-alanine ligase family. Mg(2+) is required as a cofactor. It depends on Mn(2+) as a cofactor.

The protein resides in the cytoplasm. It catalyses the reaction 2 D-alanine + ATP = D-alanyl-D-alanine + ADP + phosphate + H(+). It participates in cell wall biogenesis; peptidoglycan biosynthesis. In terms of biological role, cell wall formation. The sequence is that of D-alanine--D-alanine ligase from Trichormus variabilis (strain ATCC 29413 / PCC 7937) (Anabaena variabilis).